The primary structure comprises 244 residues: Octanoyltransferase (244 aa).

The 189-residue stretch at 49–237 (VAPGNFLIFC…HLTALFELHI (189 aa)) folds into the BPL/LPL catalytic domain. Substrate-binding positions include 94–101 (RGGDITYH), 167–169 (AMG), and 180–182 (GFA). Cys198 acts as the Acyl-thioester intermediate in catalysis.

This sequence belongs to the LipB family.

Its subcellular location is the cytoplasm. The enzyme catalyses octanoyl-[ACP] + L-lysyl-[protein] = N(6)-octanoyl-L-lysyl-[protein] + holo-[ACP] + H(+). Its pathway is protein modification; protein lipoylation via endogenous pathway; protein N(6)-(lipoyl)lysine from octanoyl-[acyl-carrier-protein]: step 1/2. In terms of biological role, catalyzes the transfer of endogenously produced octanoic acid from octanoyl-acyl-carrier-protein onto the lipoyl domains of lipoate-dependent enzymes. Lipoyl-ACP can also act as a substrate although octanoyl-ACP is likely to be the physiological substrate. The sequence is that of Octanoyltransferase from Cytophaga hutchinsonii (strain ATCC 33406 / DSM 1761 / CIP 103989 / NBRC 15051 / NCIMB 9469 / D465).